A 429-amino-acid polypeptide reads, in one-letter code: MNHDQSHALFSRAQQLLPGGVNSPVRAFKSVGGEPFFVERADGAYLYDVDGNRYIDYVGSWGPMIVGHNHPAVRQAVKKAIDNGLSFGAPCAGEVTMAETITRLVPSCEMVRMVNSGTEATLSAIRLARGATGRNRIVKFEGCYHGHGDSFLVKAGSGMLTLGVPTSPGVPAGLSELTLTLPYNDFEAATALFEQQGDDIAGLIIEPVVGNANCIPPREGYLQHLRALCTKHGALLIFDEVMTGFRVALGGAQAHYGITPDLTTFGKIIGGGMPVGAYGGRRELMQQIAPAGPIYQAGTLSGNPVAMAAGLAMLELVQQPGFHADLAERTARLCAGLEAAAADAGVAVTTTRVGAMFGLFFTSEKVETYAQATACDIPAFNRFFHAMLEQGVFLAPSAYEAGFLSSAHDDAVIEATLAAARVAFRAAKG.

An N6-(pyridoxal phosphate)lysine modification is found at Lys267.

It belongs to the class-III pyridoxal-phosphate-dependent aminotransferase family. HemL subfamily. Homodimer. It depends on pyridoxal 5'-phosphate as a cofactor.

It localises to the cytoplasm. It carries out the reaction (S)-4-amino-5-oxopentanoate = 5-aminolevulinate. It functions in the pathway porphyrin-containing compound metabolism; protoporphyrin-IX biosynthesis; 5-aminolevulinate from L-glutamyl-tRNA(Glu): step 2/2. The sequence is that of Glutamate-1-semialdehyde 2,1-aminomutase from Stenotrophomonas maltophilia (strain K279a).